A 371-amino-acid polypeptide reads, in one-letter code: LIM domain-binding protein 2 (371 aa).

Disordered regions lie at residues 244-289 (APPA…AAAN) and 325-371 (QYDA…QASQ). Over residues 263–289 (STSSTSNSSAGNNANSTNSKKKSAAAN) the composition is skewed to low complexity. Positions 296-335 (DVMVVGEPTLMGGEFGDEDERLITRLENTQYDAANGMDDE) constitute an LIM interaction domain (LID) domain. The span at 339-371 (NNSPALGNNSPWNSKPPANQETKSENPTPQASQ) shows a compositional bias: polar residues.

The protein belongs to the LDB family. As to expression, first expressed at stages 15-16 in presumptive limb mesoderm. As limb outgrowth proceeds, expressed in the entire limb bud, concentrating in the distal mesoderm throughout limb development. Both hindlimbs and forelimbs exhibit similar expression patterns.

The protein resides in the nucleus. Its function is as follows. Binds to the LIM domain of a wide variety of LIM domain-containing transcription factors. This is LIM domain-binding protein 2 (LDB2) from Gallus gallus (Chicken).